We begin with the raw amino-acid sequence, 483 residues long: Siroheme synthase (483 aa).

Residues 1–203 (MNYFPIFANL…RQNTLAEREL (203 aa)) form a precorrin-2 dehydrogenase /sirohydrochlorin ferrochelatase region. NAD(+) is bound by residues 22–23 (AV) and 43–44 (KH). At S128 the chain carries Phosphoserine. The uroporphyrinogen-III C-methyltransferase stretch occupies residues 217–483 (GSVSLVGAGP…GGLNAGQRAA (267 aa)). P226 is a binding site for S-adenosyl-L-methionine. D249 functions as the Proton acceptor in the catalytic mechanism. K271 functions as the Proton donor in the catalytic mechanism. Residues 302 to 304 (GGD), V307, 332 to 333 (TA), M384, and G413 contribute to the S-adenosyl-L-methionine site.

This sequence in the N-terminal section; belongs to the precorrin-2 dehydrogenase / sirohydrochlorin ferrochelatase family. In the C-terminal section; belongs to the precorrin methyltransferase family.

The enzyme catalyses uroporphyrinogen III + 2 S-adenosyl-L-methionine = precorrin-2 + 2 S-adenosyl-L-homocysteine + H(+). It catalyses the reaction precorrin-2 + NAD(+) = sirohydrochlorin + NADH + 2 H(+). It carries out the reaction siroheme + 2 H(+) = sirohydrochlorin + Fe(2+). Its pathway is cofactor biosynthesis; adenosylcobalamin biosynthesis; precorrin-2 from uroporphyrinogen III: step 1/1. It functions in the pathway cofactor biosynthesis; adenosylcobalamin biosynthesis; sirohydrochlorin from precorrin-2: step 1/1. The protein operates within porphyrin-containing compound metabolism; siroheme biosynthesis; precorrin-2 from uroporphyrinogen III: step 1/1. It participates in porphyrin-containing compound metabolism; siroheme biosynthesis; siroheme from sirohydrochlorin: step 1/1. Its pathway is porphyrin-containing compound metabolism; siroheme biosynthesis; sirohydrochlorin from precorrin-2: step 1/1. Its function is as follows. Multifunctional enzyme that catalyzes the SAM-dependent methylations of uroporphyrinogen III at position C-2 and C-7 to form precorrin-2 via precorrin-1. Then it catalyzes the NAD-dependent ring dehydrogenation of precorrin-2 to yield sirohydrochlorin. Finally, it catalyzes the ferrochelation of sirohydrochlorin to yield siroheme. The sequence is that of Siroheme synthase from Neisseria meningitidis serogroup B (strain ATCC BAA-335 / MC58).